Consider the following 841-residue polypeptide: Envelope glycoprotein H (841 aa).

Residues 1–17 (MFALVLAVVILPLWTTA) form the signal peptide. 3 N-linked (GlcNAc...) asparagine; by host glycosylation sites follow: Asn-18, Asn-45, and Asn-217. Residues 18-802 (NKSYVTPTPA…ERRQAIRMSG (785 aa)) lie on the Virion surface side of the membrane. Positions 246–309 (DSGRVEVNIG…DPGPSYRVYL (64 aa)) are interaction with gL. N-linked (GlcNAc...) asparagine; by host glycans are attached at residues Asn-317, Asn-499, Asn-522, Asn-760, and Asn-783. Residues 803-823 (QYLGASLGGAFLAVVGFGIIG) form a helical membrane-spanning segment. The Intravirion portion of the chain corresponds to 824-841 (WMLCGNSRLREYNKIPLT).

The protein belongs to the herpesviridae glycoprotein H family. In terms of assembly, interacts with glycoprotein L (gL); this interaction is necessary for the correct processing and cell surface expression of gH. The heterodimer gH/gL seems to interact with gB trimers during fusion. Post-translationally, N-glycosylated, O-glycosylated, and sialylated.

Its subcellular location is the virion membrane. It is found in the host cell membrane. The protein localises to the host endosome membrane. Functionally, the heterodimer glycoprotein H-glycoprotein L is required for the fusion of viral and plasma membranes leading to virus entry into the host cell. Following initial binding to host receptor, membrane fusion is mediated by the fusion machinery composed of gB and the heterodimer gH/gL. May also be involved in the fusion between the virion envelope and the outer nuclear membrane during virion morphogenesis. The sequence is that of Envelope glycoprotein H from Varicella-zoster virus (strain Oka vaccine) (HHV-3).